Consider the following 134-residue polypeptide: Small ribosomal subunit protein uS11 (134 aa).

It belongs to the universal ribosomal protein uS11 family. As to quaternary structure, part of the 30S ribosomal subunit. Interacts with proteins S7 and S18. Binds to IF-3.

Its function is as follows. Located on the platform of the 30S subunit, it bridges several disparate RNA helices of the 16S rRNA. Forms part of the Shine-Dalgarno cleft in the 70S ribosome. This chain is Small ribosomal subunit protein uS11, found in Variovorax paradoxus (strain S110).